The sequence spans 137 residues: Probable 4-amino-4-deoxy-L-arabinose-phosphoundecaprenol flippase subunit ArnF (137 aa).

Topologically, residues 1–5 (MNVPR) are cytoplasmic. The helical transmembrane segment at 6 to 26 (GWLAALGSVLLVSAAQLGMRW) threads the bilayer. The Periplasmic portion of the chain corresponds to 27–44 (GMSRLPLPEAWAGQTPEH). The chain crosses the membrane as a helical span at residues 45–65 (AALLAVALAVAAYAASLLCWL). Residues 66–76 (AALRHLPLGRA) are Cytoplasmic-facing. The chain crosses the membrane as a helical span at residues 77-97 (YSLLSASYALVYLLAASLPAF). At 98 to 100 (EET) the chain is on the periplasmic side. The chain crosses the membrane as a helical span at residues 101-121 (FTTGKTLGVGLVVLGVLTVNA). Residues 122-137 (RRTAAAPAHHPSRKAL) lie on the Cytoplasmic side of the membrane.

This sequence belongs to the ArnF family. In terms of assembly, heterodimer of ArnE and ArnF.

It is found in the cell inner membrane. Its pathway is bacterial outer membrane biogenesis; lipopolysaccharide biosynthesis. In terms of biological role, translocates 4-amino-4-deoxy-L-arabinose-phosphoundecaprenol (alpha-L-Ara4N-phosphoundecaprenol) from the cytoplasmic to the periplasmic side of the inner membrane. The polypeptide is Probable 4-amino-4-deoxy-L-arabinose-phosphoundecaprenol flippase subunit ArnF (Pseudomonas paraeruginosa (strain DSM 24068 / PA7) (Pseudomonas aeruginosa (strain PA7))).